A 425-amino-acid chain; its full sequence is Serine--tRNA ligase (425 aa).

Thr-230–Glu-232 is an L-serine binding site. Arg-261–Glu-263 is a binding site for ATP. Glu-284 is a binding site for L-serine. Glu-348–Ser-351 is an ATP binding site. Ser-384 is an L-serine binding site.

It belongs to the class-II aminoacyl-tRNA synthetase family. Type-1 seryl-tRNA synthetase subfamily. In terms of assembly, homodimer. The tRNA molecule binds across the dimer.

It is found in the cytoplasm. It catalyses the reaction tRNA(Ser) + L-serine + ATP = L-seryl-tRNA(Ser) + AMP + diphosphate + H(+). It carries out the reaction tRNA(Sec) + L-serine + ATP = L-seryl-tRNA(Sec) + AMP + diphosphate + H(+). It functions in the pathway aminoacyl-tRNA biosynthesis; selenocysteinyl-tRNA(Sec) biosynthesis; L-seryl-tRNA(Sec) from L-serine and tRNA(Sec): step 1/1. In terms of biological role, catalyzes the attachment of serine to tRNA(Ser). Is also able to aminoacylate tRNA(Sec) with serine, to form the misacylated tRNA L-seryl-tRNA(Sec), which will be further converted into selenocysteinyl-tRNA(Sec). The sequence is that of Serine--tRNA ligase from Streptococcus pyogenes serotype M3 (strain SSI-1).